Here is a 468-residue protein sequence, read N- to C-terminus: 3-isopropylmalate dehydratase large subunit (468 aa).

3 residues coordinate [4Fe-4S] cluster: Cys345, Cys405, and Cys408.

Belongs to the aconitase/IPM isomerase family. LeuC type 1 subfamily. In terms of assembly, heterodimer of LeuC and LeuD. [4Fe-4S] cluster serves as cofactor.

The enzyme catalyses (2R,3S)-3-isopropylmalate = (2S)-2-isopropylmalate. Its pathway is amino-acid biosynthesis; L-leucine biosynthesis; L-leucine from 3-methyl-2-oxobutanoate: step 2/4. Its function is as follows. Catalyzes the isomerization between 2-isopropylmalate and 3-isopropylmalate, via the formation of 2-isopropylmaleate. The polypeptide is 3-isopropylmalate dehydratase large subunit (Oceanobacillus iheyensis (strain DSM 14371 / CIP 107618 / JCM 11309 / KCTC 3954 / HTE831)).